Consider the following 201-residue polypeptide: Dermatopontin (201 aa).

A signal peptide spans 1 to 18; it reads MDLSLLWVLLPLVTMAWG. Position 19 is a pyrrolidone carboxylic acid (Gln-19). Tyr-23 bears the Sulfotyrosine mark. Tandem repeats lie at residues 26–79, 70–75, 80–135, and 125–130. The segment at 26-186 is 2 X 53-55 AA tandem repeats; it reads PYQQYHDYSD…AVERDRQWKF (161 aa). Disulfide bonds link Cys-50/Cys-77, Cys-90/Cys-132, Cys-106/Cys-133, Cys-139/Cys-196, and Cys-143/Cys-189. Residues 70–186 form a 3 X 6 AA repeats of D-R-[EQ]-W-[NQK]-[FY] region; the sequence is DRQWNYACMP…AVERDRQWKF (117 aa). A sulfotyrosine mark is found at Tyr-162, Tyr-164, Tyr-166, and Tyr-167. One copy of the 3-3 repeat lies at 181 to 186; it reads DRQWKF. The residue at position 194 (Tyr-194) is a Sulfotyrosine.

This sequence belongs to the dermatopontin family. As to quaternary structure, interacts with TGFB1, DCN and collagen. Post-translationally, sulfated on tyrosine residue(s). As to expression, expressed in fibroblasts, heart, skeletal muscle, brain and pancreas. Expressed at an intermediate level in lung and kidney, and at a low level in liver and placenta. Expressed at a lower level in fibroblasts from hypertrophic scar lesional skin and in fibroblasts from patients with systemic sclerosis than in normal skin fibroblasts.

It is found in the secreted. It localises to the extracellular space. The protein resides in the extracellular matrix. In terms of biological role, seems to mediate adhesion by cell surface integrin binding. May serve as a communication link between the dermal fibroblast cell surface and its extracellular matrix environment. Enhances TGFB1 activity. Inhibits cell proliferation. Accelerates collagen fibril formation, and stabilizes collagen fibrils against low-temperature dissociation. In Homo sapiens (Human), this protein is Dermatopontin (DPT).